The following is a 421-amino-acid chain: D-amino acid dehydrogenase (421 aa).

3 to 17 lines the FAD pocket; the sequence is VLVLGGGVVGVTSAY.

Belongs to the DadA oxidoreductase family. The cofactor is FAD.

The enzyme catalyses a D-alpha-amino acid + A + H2O = a 2-oxocarboxylate + AH2 + NH4(+). It participates in amino-acid degradation; D-alanine degradation; NH(3) and pyruvate from D-alanine: step 1/1. Oxidative deamination of D-amino acids. The sequence is that of D-amino acid dehydrogenase from Methylobacterium sp. (strain 4-46).